We begin with the raw amino-acid sequence, 81 residues long: MEITKDQFYLLQDKVSEIYEIAYSKNRETVKIESSKLMLQLEEIERDLIALEFFCGEVKTVTINDYVLGEISYLYEAIIND.

Lys-5 participates in a covalent cross-link: Glycyl lysine isopeptide (Lys-Gly) (interchain with G-Cter in host protein DncV).

Cross-linked via an isopeptide bond to E.coli host protein DncV during infection.

This is an uncharacterized protein from Enterobacteria phage T4 (Bacteriophage T4).